Here is a 295-residue protein sequence, read N- to C-terminus: Beta-chimaerin (295 aa).

A Phorbol-ester/DAG-type zinc finger spans residues 41 to 91; it reads THNFKVHTFRGPHWCEYCANFMWGLIAQGVRCSDCGLNVHKQCSKHVPNDC. One can recognise a Rho-GAP domain in the interval 104 to 295; that stretch reads CDLTTLVKAH…ILIENEDVLF (192 aa).

As to expression, found in cerebellum and testis.

The protein resides in the membrane. Its activity is regulated as follows. In the inactive state, the N terminus protrudes into the active site of the Rho-GAP domain, sterically blocking Rac binding. Phospholipid binding to the Phorbol-ester/DAG-type zinc-finger/C1 domain triggers the cooperative dissociation of these interactions, allowing the N-terminus to move out of the active site and thereby activating the enzyme. In terms of biological role, GTPase-activating protein for p21-rac. The polypeptide is Beta-chimaerin (Chn2) (Rattus norvegicus (Rat)).